The following is a 161-amino-acid chain: Phosphopantetheine adenylyltransferase (161 aa).

Substrate is bound at residue Ser9. ATP is bound by residues 9 to 10 (SF) and His17. Residues Lys41, Leu73, and Lys87 each contribute to the substrate site. ATP is bound by residues 88–90 (GLR), Glu98, and 122–128 (FSFLSSS).

This sequence belongs to the bacterial CoaD family. As to quaternary structure, homohexamer. Requires Mg(2+) as cofactor.

It is found in the cytoplasm. It carries out the reaction (R)-4'-phosphopantetheine + ATP + H(+) = 3'-dephospho-CoA + diphosphate. Its pathway is cofactor biosynthesis; coenzyme A biosynthesis; CoA from (R)-pantothenate: step 4/5. Its function is as follows. Reversibly transfers an adenylyl group from ATP to 4'-phosphopantetheine, yielding dephospho-CoA (dPCoA) and pyrophosphate. This chain is Phosphopantetheine adenylyltransferase, found in Nocardia farcinica (strain IFM 10152).